The following is a 330-amino-acid chain: B-cell receptor CD22 (330 aa).

The first 17 residues, 1–17, serve as a signal peptide directing secretion; the sequence is MHLLGPWLLLLEYLAFS. Residues 18–136 enclose the Ig-like V-type domain; it reads DSSKWAFEHP…MERIHLNVSE (119 aa). Topologically, residues 18 to 330 are extracellular; the sequence is DSSKWAFEHP…VFLQVQYAPE (313 aa). Intrachain disulfides connect cysteine 37–cysteine 165, cysteine 42–cysteine 100, and cysteine 159–cysteine 217. N-linked (GlcNAc...) asparagine glycosylation is found at asparagine 65, asparagine 99, and asparagine 110. Residue arginine 118 participates in N-acetylneuraminate binding. Asparagine 133, asparagine 162, asparagine 187, and asparagine 229 each carry an N-linked (GlcNAc...) asparagine glycan. Ig-like C2-type domains are found at residues 141–233 and 240–324; these read PHIQ…DTVQ and PKLK…VFLQ. Cysteine 263 and cysteine 307 are disulfide-bonded.

It belongs to the immunoglobulin superfamily. SIGLEC (sialic acid binding Ig-like lectin) family. As to quaternary structure, predominantly monomer of isoform CD22-beta. Also found as heterodimer of isoform CD22-beta and a shorter isoform. Interacts with PTPN6/SHP-1, LYN, SYK, PIK3R1/PIK3R2 and PLCG1 upon phosphorylation. Interacts with GRB2, INPP5D and SHC1 upon phosphorylation. May form a complex with INPP5D/SHIP, GRB2 and SHC1.

Its subcellular location is the cell membrane. In terms of biological role, most highly expressed siglec (sialic acid-binding immunoglobulin-like lectin) on B-cells that plays a role in various aspects of B-cell biology including differentiation, antigen presentation, and trafficking to bone marrow. Binds to alpha 2,6-linked sialic acid residues of surface molecules such as CD22 itself, CD45 and IgM in a cis configuration. Can also bind to ligands on other cells as an adhesion molecule in a trans configuration. Acts as an inhibitory coreceptor on the surface of B-cells and inhibits B-cell receptor induced signaling, characterized by inhibition of the calcium mobilization and cellular activation. Mechanistically, the immunoreceptor tyrosine-based inhibitory motif domain is phosphorylated by the Src kinase LYN, which in turn leads to the recruitment of the protein tyrosine phosphatase 1/PTPN6, leading to the negative regulation of BCR signaling. If this negative signaling from is of sufficient strength, apoptosis of the B-cell can be induced. The polypeptide is B-cell receptor CD22 (Pongo pygmaeus (Bornean orangutan)).